A 251-amino-acid polypeptide reads, in one-letter code: Tungstate/molybdate/chromate-binding protein ModA (251 aa).

An N-terminal signal peptide occupies residues 1–23 (MTTRLPQLLLALLASAVSLAASA). 2 residues coordinate molybdate: T60 and I168.

The protein belongs to the bacterial solute-binding protein ModA family. As to quaternary structure, the complex is composed of two ATP-binding proteins (ModC), two transmembrane proteins (ModB) and a solute-binding protein (ModA).

It localises to the periplasm. In terms of biological role, part of the ABC transporter complex ModABC involved in the transport of molybdenum into the cell. Binds tungstate and molybdate. Can also bind chromate, with lower affinity. Plays an essential role in recruitment of molybdate for nitrate reduction. This Pseudomonas aeruginosa (strain ATCC 15692 / DSM 22644 / CIP 104116 / JCM 14847 / LMG 12228 / 1C / PRS 101 / PAO1) protein is Tungstate/molybdate/chromate-binding protein ModA.